The following is a 627-amino-acid chain: Coiled-coil domain-containing protein 22 (627 aa).

The tract at residues 1–321 (MEEADRILIH…VSDVPATSRR (321 aa)) is sufficient for interaction with COMMD1. The tract at residues 1–447 (MEEADRILIH…LQDCRELESS (447 aa)) is sufficicient and required for interaction with CCDC93. The interval 218–243 (TGRDRPGDEDWVHRTSRLPPQEDTRA) is disordered. Positions 219 to 230 (GRDRPGDEDWVH) are enriched in basic and acidic residues. A coiled-coil region spans residues 320-627 (RRPEQVTWAA…AGLLGRVREA (308 aa)). Ser410 carries the post-translational modification Phosphoserine.

The protein belongs to the CCDC22 family. In terms of assembly, component of the commander complex consisting of the CCC subcomplex and the retriever subcomplex. Component of the CCC (COMMD/CCDC22/CCDC93) subcomplex consisting of COMMD1, COMMD2, COMMD3, COMMD4, COMMD5, COMMD6, COMMD7, COMMD8, COMMD9, COMMD10, CCDC22 and CCDC93. Forms a coiled-coil heterodimer with CCDC22; this heterodimer interacts with the guanine nucleotide exchange factor DENND10; the interaction is direct. Interacts with CUL1, CUL2, CUL3, SKP1, BTRC. Interacts with SNX17 and SNX31. Interacts with CPNE1 and CPNE4. Widely expressed in adult tissues and in fetal liver and brain, with highest levels in prostate and lowest in skeletal muscle.

The protein resides in the endosome. It localises to the cytoplasm. It is found in the cytoskeleton. The protein localises to the microtubule organizing center. Its subcellular location is the centrosome. Component of the commander complex that is essential for endosomal recycling of transmembrane cargos; the Commander complex is composed of composed of the CCC subcomplex and the retriever subcomplex. Component of the CCC complex, which is involved in the regulation of endosomal recycling of surface proteins, including integrins, signaling receptor and channels. Involved in regulation of NF-kappa-B signaling. Promotes ubiquitination of I-kappa-B-kinase subunit IKBKB and its subsequent proteasomal degradation leading to NF-kappa-B activation; the function may involve association with COMMD8 and a CUL1-dependent E3 ubiquitin ligase complex. May down-regulate NF-kappa-B activity via association with COMMD1 and involving a CUL2-dependent E3 ubiquitin ligase complex. Regulates the cellular localization of COMM domain-containing proteins, such as COMMD1 and COMMD10. Component of the CCC complex, which is involved in the regulation of endosomal recycling of surface proteins, including integrins, signaling receptor and channels. The CCC complex associates with SNX17, retriever and WASH complexes to prevent lysosomal degradation and promote cell surface recycling of numerous cargos such as integrins ITGA5:ITGB1. Plays a role in copper ion homeostasis. Involved in copper-dependent ATP7A trafficking between the trans-Golgi network and vesicles in the cell periphery; the function is proposed to depend on its association within the CCC complex and cooperation with the WASH complex on early endosomes. In terms of biological role, (Microbial infection) The CCC complex, in collaboration with the heterotrimeric retriever complex, mediates the exit of human papillomavirus to the cell surface. The sequence is that of Coiled-coil domain-containing protein 22 (CCDC22) from Homo sapiens (Human).